The following is a 579-amino-acid chain: Folliculin (579 aa).

Positions 32-82 (GAGSGDGAGRGEPADEEEGGIQMSSRIRAHSPAEGASAESSSPGPKKSDMC) are disordered. Residues Ser-62 and Ser-73 each carry the phosphoserine modification. A compositionally biased stretch (low complexity) spans 63 to 76 (PAEGASAESSSPGP). In terms of domain architecture, uDENN FLCN/SMCR8-type spans 86-242 (RSLAAGHPGY…RNGNAARSLT (157 aa)). Positions 285–309 (QMEQLAELEEESESWDNSEAEEEEK) form a coiled coil. Acidic residues predominate over residues 294 to 308 (EESESWDNSEAEEEE). The interval 294–321 (EESESWDNSEAEEEEKGPALPEGAEGRE) is disordered. A phosphoserine mark is found at Ser-302, Ser-406, Ser-537, Ser-542, and Ser-571. The cDENN FLCN/SMCR8-type domain occupies 339-491 (QPRKLSVFKS…ILNKMEAALT (153 aa)). Positions 493–558 (QNLSVDVVDQ…LLKFWMTGLS (66 aa)) constitute a dDENN FLCN/SMCR8-type domain.

This sequence belongs to the folliculin family. In terms of assembly, interacts (via C-terminus) with FNIP1 or FNIP2 (via C-terminus). Component of the lysosomal folliculin complex (LFC), composed of FLCN, FNIP1 (or FNIP2), RagA/RRAGA or RagB/RRAGB GDP-bound, RagC/RRAGC or RagD/RRAGD GTP-bound, and Ragulator. Interaction with FNIP1 or FNIP2 mediates indirect interaction with the PRKAA1, PRKAB1 and PRKAG1 subunits of 5'-AMP-activated protein kinase (AMPK). Interacts with HSP90AA1 in the presence of FNIP1. Interacts with HSP70, STUB1, CDC37, AHSA1, CCT2, STIP1, PTGES3 and PPP5C. Interacts with GABARAP; interaction takes place in the presence of FNIP1 and/or FNIP2. Interacts with RILP; the interaction is direct and promotes association between RILP and RAB34. Interacts with KIF3A and KIF3B. Interacts with lactate dehydrogenase LDHA, but not LDHB; the interaction is direct, may preferentially bind LDHA dimers rather than tetramers, and regulates LDHA activity, acting as an uncompetitive inhibitor. Phosphorylation by ULK1 modulates the interaction with GABARAP and is required to regulate autophagy.

Its subcellular location is the lysosome membrane. It is found in the cytoplasm. The protein resides in the cytosol. It localises to the cell projection. The protein localises to the cilium. Its subcellular location is the cytoskeleton. It is found in the microtubule organizing center. The protein resides in the centrosome. It localises to the spindle. The protein localises to the nucleus. Its activity is regulated as follows. GTPase-activating activity is inhibited in the folliculin complex (LFC), which stabilizes the GDP-bound state of RagA/RRAGA (or RagB/RRAGB), because Arg-164 is located far from the RagC/RRAGC or RagD/RRAGD nucleotide pocket. Disassembly of the LFC complex upon amino acid restimulation liberates the GTPase-activating activity. Its function is as follows. Multi-functional protein, involved in both the cellular response to amino acid availability and in the regulation of glycolysis. GTPase-activating protein that plays a key role in the cellular response to amino acid availability through regulation of the non-canonical mTORC1 signaling cascade controlling the MiT/TFE factors TFEB and TFE3. Activates mTORC1 by acting as a GTPase-activating protein: specifically stimulates GTP hydrolysis by RagC/RRAGC or RagD/RRAGD, promoting the conversion to the GDP-bound state of RagC/RRAGC or RagD/RRAGD, and thereby activating the kinase activity of mTORC1. The GTPase-activating activity is inhibited during starvation and activated in presence of nutrients. Acts as a key component for non-canonical mTORC1-dependent control of the MiT/TFE factors TFEB and TFE3, while it is not involved in mTORC1-dependent phosphorylation of canonical RPS6KB1/S6K1 and EIF4EBP1/4E-BP1. In low-amino acid conditions, the lysosomal folliculin complex (LFC) is formed on the membrane of lysosomes, which inhibits the GTPase-activating activity of FLCN, inactivates mTORC1 and maximizes nuclear translocation of TFEB and TFE3. Upon amino acid restimulation, RagA/RRAGA (or RagB/RRAGB) nucleotide exchange promotes disassembly of the LFC complex and liberates the GTPase-activating activity of FLCN, leading to activation of mTORC1 and subsequent cytoplasmic retention of TFEB and TFE3. Indirectly acts as a positive regulator of Wnt signaling by promoting mTOR-dependent cytoplasmic retention of MiT/TFE factor TFE3. Required for the exit of hematopoietic stem cell from pluripotency by promoting mTOR-dependent cytoplasmic retention of TFE3, thereby increasing Wnt signaling. Involved in the control of embryonic stem cells differentiation; together with LAMTOR1 it is necessary to recruit and activate RagC/RRAGC and RagD/RRAGD at the lysosomes, and to induce exit of embryonic stem cells from pluripotency via non-canonical, mTOR-independent TFE3 inactivation. Acts as an inhibitor of browning of adipose tissue by regulating mTOR-dependent cytoplasmic retention of TFE3. In response to flow stress, regulates STK11/LKB1 accumulation and mTORC1 activation through primary cilia: may act by recruiting STK11/LKB1 to primary cilia for activation of AMPK resided at basal bodies, causing mTORC1 down-regulation. Together with FNIP1 and/or FNIP2, regulates autophagy: following phosphorylation by ULK1, interacts with GABARAP and promotes autophagy. Required for starvation-induced perinuclear clustering of lysosomes by promoting association of RILP with its effector RAB34. Regulates glycolysis by binding to lactate dehydrogenase LDHA, acting as an uncompetitive inhibitor. The protein is Folliculin of Bos taurus (Bovine).